Reading from the N-terminus, the 206-residue chain is Tumor protein D54 (206 aa).

M1 bears the N-acetylmethionine mark. A compositionally biased stretch (polar residues) spans 1 to 14 (MDSAGQDINLNSPN). The disordered stretch occupies residues 1–24 (MDSAGQDINLNSPNKGLLSDSMTD). Residues S3, S12, S19, and S21 each carry the phosphoserine modification. Positions 38 to 82 (VEGLTEAEEEELRAELTKVEEEIVTLRQVLAAKERHCGELKRRLG) form a coiled coil. Phosphoserine is present on residues S96, S149, and S161. Phosphothreonine is present on T163. S166 carries the phosphoserine modification. At T173 the chain carries Phosphothreonine. Residues 175 to 185 (KSKVVGDRENG) show a composition bias toward basic and acidic residues. Residues 175–206 (KSKVVGDRENGSDSLPSSAGSGDKPLSDPAPF) are disordered. S192 and S195 each carry phosphoserine.

Belongs to the TPD52 family. Forms a homodimer or heterodimer with other members of the family. Interacts with MAL2.

The chain is Tumor protein D54 (TPD52L2) from Pongo abelii (Sumatran orangutan).